Reading from the N-terminus, the 426-residue chain is Glutamate-1-semialdehyde 2,1-aminomutase (426 aa).

K265 is modified (N6-(pyridoxal phosphate)lysine).

The protein belongs to the class-III pyridoxal-phosphate-dependent aminotransferase family. HemL subfamily. In terms of assembly, homodimer. It depends on pyridoxal 5'-phosphate as a cofactor.

It localises to the cytoplasm. The catalysed reaction is (S)-4-amino-5-oxopentanoate = 5-aminolevulinate. Its pathway is porphyrin-containing compound metabolism; protoporphyrin-IX biosynthesis; 5-aminolevulinate from L-glutamyl-tRNA(Glu): step 2/2. The sequence is that of Glutamate-1-semialdehyde 2,1-aminomutase from Methylococcus capsulatus (strain ATCC 33009 / NCIMB 11132 / Bath).